A 378-amino-acid chain; its full sequence is Chaperone protein DnaJ (378 aa).

In terms of domain architecture, J spans 5 to 70 (DYYEVLSVSR…DKKAAYDQFG (66 aa)). The CR-type zinc finger occupies 133 to 211 (GLTKELRIPT…CHGEGRVEKS (79 aa)). Zn(2+) contacts are provided by Cys-146, Cys-149, Cys-163, Cys-166, Cys-185, Cys-188, Cys-199, and Cys-202. CXXCXGXG motif repeat units lie at residues 146-153 (CDSCDGSG), 163-170 (CGTCHGQG), 185-192 (CPTCHGRG), and 199-206 (CNKCHGEG).

This sequence belongs to the DnaJ family. In terms of assembly, homodimer. Requires Zn(2+) as cofactor.

The protein localises to the cytoplasm. Participates actively in the response to hyperosmotic and heat shock by preventing the aggregation of stress-denatured proteins and by disaggregating proteins, also in an autonomous, DnaK-independent fashion. Unfolded proteins bind initially to DnaJ; upon interaction with the DnaJ-bound protein, DnaK hydrolyzes its bound ATP, resulting in the formation of a stable complex. GrpE releases ADP from DnaK; ATP binding to DnaK triggers the release of the substrate protein, thus completing the reaction cycle. Several rounds of ATP-dependent interactions between DnaJ, DnaK and GrpE are required for fully efficient folding. Also involved, together with DnaK and GrpE, in the DNA replication of plasmids through activation of initiation proteins. This Shewanella sediminis (strain HAW-EB3) protein is Chaperone protein DnaJ.